A 55-amino-acid chain; its full sequence is Large ribosomal subunit protein bL33 (55 aa).

This sequence belongs to the bacterial ribosomal protein bL33 family.

The protein is Large ribosomal subunit protein bL33 of Phenylobacterium zucineum (strain HLK1).